The following is a 364-amino-acid chain: Monocarboxylate 2-oxoacid-binding periplasmic protein all3028 (364 aa).

Residues 1-26 (MKRREVLNTAAIATATTALVSCTQTN) form the signal peptide. Substrate is bound by residues 103-104 (YY), Gln-160, and Arg-181. Residue Gln-160 participates in Na(+) binding. The Na(+) site is built by Glu-218, Trp-219, and Glu-244.

Belongs to the bacterial solute-binding protein 7 family. Homodimer. The complex comprises the extracytoplasmic solute receptor protein all3028, and the two putative transmembrane proteins alr3026 and alr3027.

It is found in the periplasm. Pyruvate uptake inhibited by 2-oxobutyrate, 2-oxovalerate, 2-oxoisovalerate, 2-oxoisocaproate and 2-oxo-3-methylvalerate. Functionally, part of the tripartite ATP-independent periplasmic (TRAP) transport system involved in the uptake of monocarboxylate 2-oxoacids. This protein specifically binds monocarboxylate 2-oxoacids including pyruvate, 2-oxobutyrate, 2-oxovalerate, 2-oxoisovalerate, 2-oxoisocaproate and 2-oxo-3-methylvalerate. Is not able to bind mannitol. This is Monocarboxylate 2-oxoacid-binding periplasmic protein all3028 from Nostoc sp. (strain PCC 7120 / SAG 25.82 / UTEX 2576).